The sequence spans 656 residues: Exoribonuclease 2 (656 aa).

One can recognise an RNB domain in the interval R190–L518. The 86-residue stretch at K564–A649 folds into the S1 motif domain.

It belongs to the RNR ribonuclease family. RNase II subfamily.

The protein localises to the cytoplasm. It carries out the reaction Exonucleolytic cleavage in the 3'- to 5'-direction to yield nucleoside 5'-phosphates.. Involved in mRNA degradation. Hydrolyzes single-stranded polyribonucleotides processively in the 3' to 5' direction. The polypeptide is Exoribonuclease 2 (Psychromonas ingrahamii (strain DSM 17664 / CCUG 51855 / 37)).